Here is a 364-residue protein sequence, read N- to C-terminus: Spermidine/putrescine import ATP-binding protein PotA (364 aa).

In terms of domain architecture, ABC transporter spans 5–235 (LSFKSVSKQY…PVNRFVADFI (231 aa)). ATP is bound at residue 37–44 (GPSGCGKT).

Belongs to the ABC transporter superfamily. Spermidine/putrescine importer (TC 3.A.1.11.1) family. The complex is composed of two ATP-binding proteins (PotA), two transmembrane proteins (PotB and PotC) and a solute-binding protein (PotD).

It is found in the cell membrane. It catalyses the reaction ATP + H2O + polyamine-[polyamine-binding protein]Side 1 = ADP + phosphate + polyamineSide 2 + [polyamine-binding protein]Side 1.. Functionally, part of the ABC transporter complex PotABCD involved in spermidine/putrescine import. Responsible for energy coupling to the transport system. This chain is Spermidine/putrescine import ATP-binding protein PotA, found in Staphylococcus saprophyticus subsp. saprophyticus (strain ATCC 15305 / DSM 20229 / NCIMB 8711 / NCTC 7292 / S-41).